We begin with the raw amino-acid sequence, 320 residues long: ATP-dependent 6-phosphofructokinase (320 aa).

Position 12 (G12) interacts with ATP. Residues 22-26 (RGVVR) and 55-60 (RYSVSD) each bind ADP. Residues 73–74 (RF) and 103–106 (GDGS) each bind ATP. Residue D104 participates in Mg(2+) binding. 126 to 128 (TID) serves as a coordination point for substrate. The active-site Proton acceptor is the D128. Position 155 (R155) interacts with ADP. Substrate-binding positions include R163 and 170 to 172 (MGR). ADP-binding positions include 186 to 188 (GCE), K212, and 214 to 216 (KKH). Residues E223, R244, and 250–253 (HIQR) each bind substrate.

It belongs to the phosphofructokinase type A (PFKA) family. ATP-dependent PFK group I subfamily. Prokaryotic clade 'B1' sub-subfamily. Homotetramer. Mg(2+) is required as a cofactor.

The protein localises to the cytoplasm. It carries out the reaction beta-D-fructose 6-phosphate + ATP = beta-D-fructose 1,6-bisphosphate + ADP + H(+). It functions in the pathway carbohydrate degradation; glycolysis; D-glyceraldehyde 3-phosphate and glycerone phosphate from D-glucose: step 3/4. Allosterically activated by ADP and other diphosphonucleosides, and allosterically inhibited by phosphoenolpyruvate. Catalyzes the phosphorylation of D-fructose 6-phosphate to fructose 1,6-bisphosphate by ATP, the first committing step of glycolysis. The polypeptide is ATP-dependent 6-phosphofructokinase (Escherichia fergusonii (strain ATCC 35469 / DSM 13698 / CCUG 18766 / IAM 14443 / JCM 21226 / LMG 7866 / NBRC 102419 / NCTC 12128 / CDC 0568-73)).